A 111-amino-acid chain; its full sequence is uncharacterized protein (111 aa).

A run of 4 helical transmembrane segments spans residues 4–21, 28–47, 51–73, and 80–102; these read FITALPIVLLLGFSFVSF, LVYFRLALGLFSLVGLYMIY, TGIRYFIIYLYASWIVLAAVTAF, and SFFFGGLVMTMGYLTYMLIYLGM.

It is found in the cell membrane. This is an uncharacterized protein from Bacillus subtilis (strain 168).